Here is a 498-residue protein sequence, read N- to C-terminus: ATP synthase subunit beta, chloroplastic (498 aa).

ATP is bound at residue 172 to 179 (GGAGVGKT).

This sequence belongs to the ATPase alpha/beta chains family. In terms of assembly, F-type ATPases have 2 components, CF(1) - the catalytic core - and CF(0) - the membrane proton channel. CF(1) has five subunits: alpha(3), beta(3), gamma(1), delta(1), epsilon(1). CF(0) has four main subunits: a(1), b(1), b'(1) and c(9-12).

It localises to the plastid. It is found in the chloroplast thylakoid membrane. It catalyses the reaction ATP + H2O + 4 H(+)(in) = ADP + phosphate + 5 H(+)(out). In terms of biological role, produces ATP from ADP in the presence of a proton gradient across the membrane. The catalytic sites are hosted primarily by the beta subunits. The protein is ATP synthase subunit beta, chloroplastic of Panax ginseng (Korean ginseng).